The chain runs to 308 residues: tRNA dimethylallyltransferase (308 aa).

Glycine 11–threonine 18 provides a ligand contact to ATP. Threonine 13–threonine 18 is a binding site for substrate. Residues aspartate 36–glutamine 39 are interaction with substrate tRNA.

It belongs to the IPP transferase family. In terms of assembly, monomer. The cofactor is Mg(2+).

It carries out the reaction adenosine(37) in tRNA + dimethylallyl diphosphate = N(6)-dimethylallyladenosine(37) in tRNA + diphosphate. Functionally, catalyzes the transfer of a dimethylallyl group onto the adenine at position 37 in tRNAs that read codons beginning with uridine, leading to the formation of N6-(dimethylallyl)adenosine (i(6)A). The sequence is that of tRNA dimethylallyltransferase from Lactobacillus gasseri (strain ATCC 33323 / DSM 20243 / BCRC 14619 / CIP 102991 / JCM 1131 / KCTC 3163 / NCIMB 11718 / NCTC 13722 / AM63).